The sequence spans 359 residues: Tricarboxylate transport protein A, mitochondrial (359 aa).

Solcar repeat units lie at residues 71–159 (THPW…LSNP), 170–256 (KASL…LRNW), and 266–351 (MHPL…VVKL). 4 consecutive transmembrane segments (helical) span residues 77–97 (IFAG…TEYV), 171–191 (ASLL…VCPM), 269–289 (LVTA…NTPL), and 336–356 (LDVA…NNVW).

This sequence belongs to the mitochondrial carrier (TC 2.A.29) family. In terms of processing, possesses a short cleavable presequence, which, however, is found to be dispensable both for targeting to mitochondria and insertion into the inner membrane. However, the presequence is required to keep SLC25A1 in a soluble state and thus in an import-competent state. Mature SLC25A1 lacking the presequence is prone to aggregation.

It is found in the mitochondrion inner membrane. The catalysed reaction is (S)-malate(in) + citrate(out) = (S)-malate(out) + citrate(in). It carries out the reaction D-threo-isocitrate(in) + citrate(out) = D-threo-isocitrate(out) + citrate(in). It catalyses the reaction citrate(out) + succinate(in) = citrate(in) + succinate(out). The enzyme catalyses cis-aconitate(in) + citrate(out) = cis-aconitate(out) + citrate(in). The catalysed reaction is trans-aconitate(in) + citrate(out) = trans-aconitate(out) + citrate(in). It carries out the reaction phosphoenolpyruvate(in) + citrate(out) = phosphoenolpyruvate(out) + citrate(in). It catalyses the reaction maleate(in) + citrate(out) = maleate(out) + citrate(in). Mitochondrial electroneutral antiporter that exports citrate from the mitochondria into the cytosol in exchange for malate. Also able to mediate the exchange of citrate for isocitrate, phosphoenolpyruvate, cis-aconitate and to a lesser extent trans-aconitate, maleate and succinate. In the cytoplasm, citrate plays important roles in fatty acid and sterol synthesis, regulation of glycolysis, protein acetylation, and other physiopathological processes. This Danio rerio (Zebrafish) protein is Tricarboxylate transport protein A, mitochondrial.